The primary structure comprises 266 residues: Proteasome subunit beta type-7 (266 aa).

Residues 1 to 34 constitute a propeptide, removed in mature form; it reads MENLNRGGFDFDLCNRNNVLEKTGLRMKGFMKTG. Threonine 35 serves as the catalytic Nucleophile.

Belongs to the peptidase T1B family. The 26S proteasome consists of a 20S proteasome core and two 19S regulatory subunits. The 20S proteasome core is composed of 28 subunits that are arranged in four stacked rings, resulting in a barrel-shaped structure. The two end rings are each formed by seven alpha subunits, and the two central rings are each formed by seven beta subunits. The catalytic chamber with the active sites is on the inside of the barrel.

The protein resides in the cytoplasm. It is found in the nucleus. The catalysed reaction is Cleavage of peptide bonds with very broad specificity.. The proteasome is a multicatalytic proteinase complex which is characterized by its ability to cleave peptides with Arg, Phe, Tyr, Leu, and Glu adjacent to the leaving group at neutral or slightly basic pH. The proteasome has an ATP-dependent proteolytic activity. The polypeptide is Proteasome subunit beta type-7 (psmB7) (Dictyostelium discoideum (Social amoeba)).